We begin with the raw amino-acid sequence, 521 residues long: Aspartic proteinase yapsin-1 (521 aa).

The first 17 residues, 1–17 (MRIWILIFFSFIKLVSS), serve as a signal peptide directing secretion. Over 18–500 (LQYTGNGVLA…NAVANAGNSF (483 aa)) the chain is Extracellular. Residues 67–409 (YTTTLSIGRP…HQSQKMIAIG (343 aa)) form the Peptidase A1 domain. D85 is a catalytic residue. 10 N-linked (GlcNAc...) asparagine glycosylation sites follow: N136, N157, N250, N289, N295, N354, N414, N418, N460, and N484. The chain crosses the membrane as a helical span at residues 501 to 521 (SPLSAMVIMMMSAVFLGLGII).

This sequence belongs to the peptidase A1 family.

Its subcellular location is the endoplasmic reticulum membrane. The protein resides in the secreted. It localises to the cell wall. Cleaves at paired basic residues. This chain is Aspartic proteinase yapsin-1 (yps1), found in Schizosaccharomyces pombe (strain 972 / ATCC 24843) (Fission yeast).